Here is a 793-residue protein sequence, read N- to C-terminus: Phenylalanine--tRNA ligase beta subunit (793 aa).

Positions 39–148 constitute a tRNA-binding domain; that stretch reads AAPFKGVKAA…EGDFPGVDLH (110 aa). Residues 401 to 476 form the B5 domain; sequence PPQATIILRK…RLYGYDRLPS (76 aa). The Mg(2+) site is built by aspartate 454, aspartate 460, glutamate 463, and glutamate 464. Residues 699-792 form the FDX-ACB domain; sequence SKFPAIRRDI…LVTELGAIIR (94 aa).

Belongs to the phenylalanyl-tRNA synthetase beta subunit family. Type 1 subfamily. Tetramer of two alpha and two beta subunits. Requires Mg(2+) as cofactor.

The protein localises to the cytoplasm. It catalyses the reaction tRNA(Phe) + L-phenylalanine + ATP = L-phenylalanyl-tRNA(Phe) + AMP + diphosphate + H(+). In Nitrosococcus oceani (strain ATCC 19707 / BCRC 17464 / JCM 30415 / NCIMB 11848 / C-107), this protein is Phenylalanine--tRNA ligase beta subunit.